The following is a 437-amino-acid chain: MATAVSTIGSVNRAPPNLNGSSSSASVPSSTFLGSSLKKVNSRFTNSKVSSGSLRIVASVDEDKQTDKDRWKGLAFDTSDDQQDITRGKGKVDSLFQAPQGSGTHFAIMSSYEYISTGLRQYNFDNNMDGYYIAPAFMDKLVVHITKNFMTLPNMKVPLILGIWGGKGQGKSFQCELVFAKMRISPIMMSAGELESGNAGEPAKLIRQRYREAADIIRKGKMCALFINDLDAGAGRLGGTTQYTVNNQMVNATLMNIADNPTNVQLPGMYNKEENPRVPIIVTGNDFSTLYAPLIRDGRMEKFYWAPTREDRIGVCIGIFRSDNVAKEDIVKLVDTFPGQSIDFFGALRARVYDDEVRKWITGVGVDSIGKKLVNSKEGPPTFEQPKMTIEKLLEYGNMLVQEQENVKRVQLADKYLSEAALGDANSDAMNTGTFYG.

The span at 1 to 10 (MATAVSTIGS) shows a compositional bias: polar residues. Residues 1–26 (MATAVSTIGSVNRAPPNLNGSSSSAS) are disordered. Residue 165–172 (GGKGQGKS) coordinates ATP.

The protein belongs to the RuBisCO activase family.

It localises to the plastid. The protein localises to the chloroplast stroma. In terms of biological role, activation of RuBisCO (ribulose-1,5-bisphosphate carboxylase/oxygenase; EC 4.1.1.39) involves the ATP-dependent carboxylation of the epsilon-amino group of lysine leading to a carbamate structure. The polypeptide is Ribulose bisphosphate carboxylase/oxygenase activase, chloroplastic (RCA) (Malus domestica (Apple)).